A 302-amino-acid polypeptide reads, in one-letter code: Ornithine carbamoyltransferase (302 aa).

Carbamoyl phosphate is bound by residues 52–55 (STRT), Q79, R103, and 130–133 (HPCQ). L-ornithine-binding positions include N161, D222, and 226–227 (SM). Carbamoyl phosphate is bound by residues 262-263 (CL) and R290.

This sequence belongs to the aspartate/ornithine carbamoyltransferase superfamily. OTCase family.

It is found in the cytoplasm. The enzyme catalyses carbamoyl phosphate + L-ornithine = L-citrulline + phosphate + H(+). It participates in amino-acid biosynthesis; L-arginine biosynthesis; L-arginine from L-ornithine and carbamoyl phosphate: step 1/3. Reversibly catalyzes the transfer of the carbamoyl group from carbamoyl phosphate (CP) to the N(epsilon) atom of ornithine (ORN) to produce L-citrulline. The sequence is that of Ornithine carbamoyltransferase from Syntrophus aciditrophicus (strain SB).